The primary structure comprises 614 residues: Acetylcholinesterase (614 aa).

The signal sequence occupies residues 1 to 31 (MRPPWYPLHTPSLASPLLFLLLSLLGGGARA). A disulfide bond links Cys-100 and Cys-127. Ser-234 serves as the catalytic Acyl-ester intermediate. A disulfide bond links Cys-288 and Cys-303. N-linked (GlcNAc...) asparagine glycosylation occurs at Asn-296. Residue Glu-365 is the Charge relay system of the active site. A glycan (N-linked (GlcNAc...) asparagine) is linked at Asn-381. A disulfide bond links Cys-440 and Cys-560. His-478 functions as the Charge relay system in the catalytic mechanism. The N-linked (GlcNAc...) asparagine glycan is linked to Asn-495.

This sequence belongs to the type-B carboxylesterase/lipase family. Homotetramer; composed of disulfide-linked homodimers. Catalytic forms H (GPI-anchor dimer) and T (asymmetric collagen-tailed), which differ in their C-terminus, account for all types of known ACHE forms. Interacts with PRIMA1. The interaction with PRIMA1 is required to anchor it to the basal lamina of cells and organize into tetramers. Has been found in central nervous system and muscle. Found in embryonic liver and spleen but not in adult liver.

It localises to the synapse. The protein resides in the secreted. Its subcellular location is the cell membrane. It carries out the reaction acetylcholine + H2O = choline + acetate + H(+). Its function is as follows. Terminates signal transduction at the neuromuscular junction by rapid hydrolysis of the acetylcholine released into the synaptic cleft. This Rattus norvegicus (Rat) protein is Acetylcholinesterase (Ache).